Reading from the N-terminus, the 172-residue chain is Signal peptidase complex catalytic subunit SEC11 (172 aa).

At 1–14 (MLSSLGNPRQAAAQ) the chain is on the cytoplasmic side. A helical; Signal-anchor for type II membrane protein membrane pass occupies residues 15-35 (LMNFALILSTAFMMWKGLSVI). Over 36-172 (TDSPSPIVVV…MGLLVVLQRE (137 aa)) the chain is Lumenal. Catalysis depends on charge relay system residues Ser-49 and His-90. Asn-111 is a glycosylation site (N-linked (GlcNAc...) asparagine). Asp-115 (charge relay system) is an active-site residue. Positions 158–169 (VMLGIMGLLVVL) are C-terminal short (CTS) helix.

This sequence belongs to the peptidase S26B family. In terms of assembly, component of the signal peptidase complex (SPC) composed of a catalytic subunit SEC11 and three accessory subunits SPC1, SPC2 and SPC3. The complex induces a local thinning of the ER membrane which is used to measure the length of the signal peptide (SP) h-region of protein substrates. This ensures the selectivity of the complex towards h-regions shorter than 18-20 amino acids. SPC associates with the translocon complex.

The protein resides in the endoplasmic reticulum membrane. The enzyme catalyses Cleavage of hydrophobic, N-terminal signal or leader sequences from secreted and periplasmic proteins.. In terms of biological role, catalytic component of the signal peptidase complex (SPC) which catalyzes the cleavage of N-terminal signal sequences from nascent proteins as they are translocated into the lumen of the endoplasmic reticulum. Specifically cleaves N-terminal signal peptides that contain a hydrophobic alpha-helix (h-region) shorter than 18-20 amino acids. This is Signal peptidase complex catalytic subunit SEC11 (SEC11) from Fusarium vanettenii (strain ATCC MYA-4622 / CBS 123669 / FGSC 9596 / NRRL 45880 / 77-13-4) (Fusarium solani subsp. pisi).